The primary structure comprises 359 residues: tRNA-specific 2-thiouridylase MnmA (359 aa).

ATP-binding positions include G9 to S16 and M35. C105 serves as the catalytic Nucleophile. C105 and C203 form a disulfide bridge. G129 is a binding site for ATP. The interaction with tRNA stretch occupies residues K153–Q155. Residue C203 is the Cysteine persulfide intermediate of the active site. The interaction with tRNA stretch occupies residues R309 to Y310.

This sequence belongs to the MnmA/TRMU family.

It is found in the cytoplasm. The catalysed reaction is S-sulfanyl-L-cysteinyl-[protein] + uridine(34) in tRNA + AH2 + ATP = 2-thiouridine(34) in tRNA + L-cysteinyl-[protein] + A + AMP + diphosphate + H(+). Its function is as follows. Catalyzes the 2-thiolation of uridine at the wobble position (U34) of tRNA, leading to the formation of s(2)U34. The polypeptide is tRNA-specific 2-thiouridylase MnmA (Acetivibrio thermocellus (strain ATCC 27405 / DSM 1237 / JCM 9322 / NBRC 103400 / NCIMB 10682 / NRRL B-4536 / VPI 7372) (Clostridium thermocellum)).